Reading from the N-terminus, the 891-residue chain is Extended synaptotagmin-3 (891 aa).

The disordered stretch occupies residues 1 to 30; the sequence is MQPEEPCAPSAPGGPDVPERGQRSRDPGPR. The Cytoplasmic segment spans residues 1 to 32; sequence MQPEEPCAPSAPGGPDVPERGQRSRDPGPRLS. Basic and acidic residues predominate over residues 17–28; that stretch reads VPERGQRSRDPG. A helical membrane pass occupies residues 33 to 53; that stretch reads GQLLPELYSFVARVLFYLAPV. A topological domain (lumenal) is located at residue Tyr54. Residues 55–75 form a helical membrane-spanning segment; the sequence is LAGYLGLSVTWLLLGALLWMW. At 76 to 891 the chain is on the cytoplasmic side; the sequence is WRRNRRGKLG…ELTADGQPRS (816 aa). Positions 118-295 constitute an SMP-LTD domain; that stretch reads DVERVEWANK…LPNRVTVPVK (178 aa). C2 domains are found at residues 292-412 and 430-570; these read VPVK…DEWF and SLLT…QLDH. Ca(2+)-binding residues include Lys325, Asp326, Asp336, Asp383, Glu384, Asp385, Asp387, Asp389, and Asp390. The tract at residues 652 to 711 is disordered; sequence SAATTDPEPMPEPQGPGPEPKGKDSARGLCESPGKKKNPATTFLTVPGLHSPGPIKSPRP. Positions 659–670 are enriched in pro residues; the sequence is EPMPEPQGPGPE. Residues 759-881 form the C2 3 domain; it reads RLGEIQLTVR…DLIKGFSQWY (123 aa). The tract at residues 806-813 is required for phosphatidylinositol 4,5-bisphosphate-dependent location at the cell membrane; sequence RRWASRKK.

Belongs to the extended synaptotagmin family.

It is found in the cell membrane. It localises to the endoplasmic reticulum membrane. Functionally, tethers the endoplasmic reticulum to the cell membrane and promotes the formation of appositions between the endoplasmic reticulum and the cell membrane. Binds glycerophospholipids in a barrel-like domain and may play a role in cellular lipid transport. The chain is Extended synaptotagmin-3 (Esyt3) from Mus musculus (Mouse).